The primary structure comprises 71 residues: MANLKAVFLICILAFIAFHCVVGAPTAEDSIVVKRSIGTAVKKAVPIAKKVGKVAIPIAKAVLSVVGQLVG.

The first 23 residues, 1-23, serve as a signal peptide directing secretion; sequence MANLKAVFLICILAFIAFHCVVG. The propeptide occupies 24 to 35; the sequence is APTAEDSIVVKR.

Homomer of four to six subunits.

The protein localises to the secreted. Functionally, female-specific peptides with potent activity against Gram-positive and Gram-negative bacteria. They have as well hemolytic activity. The polypeptide is Ceratotoxin-D (CTXD) (Ceratitis capitata (Mediterranean fruit fly)).